Consider the following 613-residue polypeptide: Acetylcholinesterase (613 aa).

A signal peptide spans 1–30 (MRPPWCPLHTPSLTPPLLLLLFLIGGGAEA). An N-linked (GlcNAc...) asparagine glycan is attached at Asn91. A disulfide bridge links Cys99 with Cys126. The active-site Acyl-ester intermediate is the Ser233. The cysteines at positions 287 and 302 are disulfide-linked. Asn295 carries an N-linked (GlcNAc...) asparagine glycan. The Charge relay system role is filled by Glu364. Asn380 carries N-linked (GlcNAc...) asparagine glycosylation. A disulfide bridge connects residues Cys439 and Cys559. His477 (charge relay system) is an active-site residue. Asn494 carries an N-linked (GlcNAc...) asparagine glycan.

It belongs to the type-B carboxylesterase/lipase family. Interacts with PRIMA1. The interaction with PRIMA1 is required to anchor it to the basal lamina of cells and organize into tetramers. Isoform H generates GPI-anchored dimers; disulfide linked. Isoform T generates multiple structures, ranging from monomers and dimers to collagen-tailed and hydrophobic-tailed forms, in which catalytic tetramers are associated with anchoring proteins that attach them to the basal lamina or to cell membranes. In the collagen-tailed forms, isoform T subunits are associated with a specific collagen, COLQ, which triggers the formation of isoform T tetramers, from monomers and dimers.

Its subcellular location is the synapse. It localises to the secreted. The protein localises to the cell membrane. It catalyses the reaction acetylcholine + H2O = choline + acetate + H(+). Functionally, terminates signal transduction at the neuromuscular junction by rapid hydrolysis of the acetylcholine released into the synaptic cleft. This chain is Acetylcholinesterase (ACHE), found in Bos taurus (Bovine).